The following is a 380-amino-acid chain: Cytochrome b (380 aa).

4 helical membrane-spanning segments follow: residues F34–M54, W78–I99, W114–L134, and F179–T199. Heme b contacts are provided by H84 and H98. Heme b is bound by residues H183 and H197. H202 lines the a ubiquinone pocket. Transmembrane regions (helical) follow at residues L227–S247, L289–H309, L321–S341, and F348–P368.

This sequence belongs to the cytochrome b family. In terms of assembly, the cytochrome bc1 complex contains 11 subunits: 3 respiratory subunits (MT-CYB, CYC1 and UQCRFS1), 2 core proteins (UQCRC1 and UQCRC2) and 6 low-molecular weight proteins (UQCRH/QCR6, UQCRB/QCR7, UQCRQ/QCR8, UQCR10/QCR9, UQCR11/QCR10 and a cleavage product of UQCRFS1). This cytochrome bc1 complex then forms a dimer. Heme b is required as a cofactor.

The protein localises to the mitochondrion inner membrane. Its function is as follows. Component of the ubiquinol-cytochrome c reductase complex (complex III or cytochrome b-c1 complex) that is part of the mitochondrial respiratory chain. The b-c1 complex mediates electron transfer from ubiquinol to cytochrome c. Contributes to the generation of a proton gradient across the mitochondrial membrane that is then used for ATP synthesis. The sequence is that of Cytochrome b (MT-CYB) from Daption capense (Cape petrel).